A 294-amino-acid chain; its full sequence is Elongation factor Ts (294 aa).

The involved in Mg(2+) ion dislocation from EF-Tu stretch occupies residues 80–83 (TDFV).

This sequence belongs to the EF-Ts family.

The protein resides in the cytoplasm. Associates with the EF-Tu.GDP complex and induces the exchange of GDP to GTP. It remains bound to the aminoacyl-tRNA.EF-Tu.GTP complex up to the GTP hydrolysis stage on the ribosome. The sequence is that of Elongation factor Ts from Polynucleobacter necessarius subsp. necessarius (strain STIR1).